Here is a 320-residue protein sequence, read N- to C-terminus: Foldase protein PrsA (320 aa).

The first 20 residues, 1–20, serve as a signal peptide directing secretion; it reads MKMINKLIVPVTASALLLGA. Cys-21 is lipidated: N-palmitoyl cysteine. Residue Cys-21 is the site of S-diacylglycerol cysteine attachment. In terms of domain architecture, PpiC spans 139–245; the sequence is EDSKKASHIL…FGYHIIKADK (107 aa). The interval 159–198 is disordered; the sequence is EGLDDKEAKQKAEEIQKEVSKDPSKFGEIAKKESMDTGSA.

It belongs to the PrsA family.

Its subcellular location is the cell membrane. It catalyses the reaction [protein]-peptidylproline (omega=180) = [protein]-peptidylproline (omega=0). Plays a major role in protein secretion by helping the post-translocational extracellular folding of several secreted proteins. This chain is Foldase protein PrsA, found in Staphylococcus aureus (strain bovine RF122 / ET3-1).